A 117-amino-acid polypeptide reads, in one-letter code: MKFQYKEDHPFEYRKKEGEKIRKKYPDRVPVIVEKAPKARVPDLDKRKYLVPSDLTVGQFYFLIRKRIHLRPEDALFFFVNNTIPPTSATMGQLYEDNREEDYFLYVAYSDESVYGK.

Gly-116 carries Phosphatidylethanolamine amidated glycine; alternate lipidation. Gly-116 is lipidated: Phosphatidylserine amidated glycine; alternate. A propeptide (removed in mature form) is located at residue Lys-117.

The protein belongs to the ATG8 family. In terms of assembly, interacts with ATG13, OPRK1, RB1CC1 and ULK1. Interacts with TP53INP1 and TP53INP2. Directly interacts with SQSTM1. Interacts with ATG3, ATG7 and MAP15. Interacts with TECPR2. Interacts with TBC1D5. Interacts with MAPK15. Interacts with TRIM5. Interacts with MEFV and TRIM21. Interacts with WDFY3. Interacts with the reticulophagy receptor TEX264. Interacts with UBA5. Interacts with KBTBD6 and KBTBD7; the interaction is direct. Interacts with reticulophagy regulators RETREG1, RETREG2 and RETREG3. Interacts with IRGM. Interacts with DNM2. Interacts with NCOA4 (via C-terminus). In terms of processing, the precursor molecule is cleaved by ATG4 (ATG4A, ATG4B, ATG4C or ATG4D) to expose the glycine at the C-terminus and form the cytosolic form, GABARAPL1-I. The processed form is then activated by APG7L/ATG7, transferred to ATG3 and conjugated to phosphatidylethanolamine (PE) phospholipid to form the membrane-bound form, GABARAPL1-II. During non-canonical autophagy, the processed form is conjugated to phosphatidylserine (PS) phospholipid. ATG4 proteins also mediate the delipidation of PE-conjugated forms required for GABARAPL1 recycling when autophagosomes fuse with lysosomes. In addition, ATG4B and ATG4D mediate delipidation of ATG8 proteins conjugated to PS during non-canonical autophagy. ATG4B constitutes the major protein for proteolytic activation. ATG4D is the main enzyme for delipidation activity.

It is found in the cytoplasmic vesicle. The protein resides in the autophagosome. The protein localises to the cytoplasmic vesicle membrane. Its subcellular location is the cytoplasm. It localises to the cytoskeleton. It is found in the endoplasmic reticulum. The protein resides in the golgi apparatus. Functionally, ubiquitin-like modifier that increases cell-surface expression of kappa-type opioid receptor through facilitating anterograde intracellular trafficking of the receptor. Involved in formation of autophagosomal vacuoles. While LC3s are involved in elongation of the phagophore membrane, the GABARAP/GATE-16 subfamily is essential for a later stage in autophagosome maturation. Through its interaction with the reticulophagy receptor TEX264, participates in the remodeling of subdomains of the endoplasmic reticulum into autophagosomes upon nutrient stress, which then fuse with lysosomes for endoplasmic reticulum turnover. The polypeptide is Gamma-aminobutyric acid receptor-associated protein-like 1 (Pongo abelii (Sumatran orangutan)).